We begin with the raw amino-acid sequence, 256 residues long: Type III pantothenate kinase (256 aa).

Residue 6–13 participates in ATP binding; it reads DIGNTHIV. 109 to 112 lines the substrate pocket; sequence GADR. The Proton acceptor role is filled by D111. A K(+)-binding site is contributed by D132. T135 contacts ATP. Position 186 (T186) interacts with substrate.

It belongs to the type III pantothenate kinase family. In terms of assembly, homodimer. Requires NH4(+) as cofactor. The cofactor is K(+).

It localises to the cytoplasm. It carries out the reaction (R)-pantothenate + ATP = (R)-4'-phosphopantothenate + ADP + H(+). Its pathway is cofactor biosynthesis; coenzyme A biosynthesis; CoA from (R)-pantothenate: step 1/5. Catalyzes the phosphorylation of pantothenate (Pan), the first step in CoA biosynthesis. The protein is Type III pantothenate kinase of Fusobacterium nucleatum subsp. nucleatum (strain ATCC 25586 / DSM 15643 / BCRC 10681 / CIP 101130 / JCM 8532 / KCTC 2640 / LMG 13131 / VPI 4355).